We begin with the raw amino-acid sequence, 750 residues long: Methylmalonyl-CoA mutase, mitochondrial (750 aa).

A mitochondrion-targeting transit peptide spans 1 to 32 (MLRAKNQLFLLSPHYLRQVKESSGSRLIQQRL). Gln50 lines the malonyl-CoA pocket. Position 89 is an N6-acetyllysine (Lys89). Malonyl-CoA contacts are provided by residues 96–99 (YPTM) and 106–110 (TIRQY). N6-acetyllysine is present on Lys212. Residues 216 to 218 (TIQ), Arg228, Lys255, His265, and 304 to 306 (RLS) each bind malonyl-CoA. Residue Lys335 is modified to N6-acetyllysine. An N6-succinyllysine modification is found at Lys343. At Ser481 the chain carries Phosphoserine. Lys595 is modified (N6-succinyllysine). Lys602 carries the N6-acetyllysine modification. The B12-binding domain occupies 614–746 (RPRLLVAKMG…DDIEKCLEKK (133 aa)). Residue His627 participates in adenosylcob(III)alamin binding.

It belongs to the methylmalonyl-CoA mutase family. In terms of assembly, homodimer. Interacts (the apoenzyme form) with MMAA; the interaction is GTP dependent. The cofactor is adenosylcob(III)alamin.

It localises to the mitochondrion matrix. The protein localises to the mitochondrion. It is found in the cytoplasm. The enzyme catalyses (R)-methylmalonyl-CoA = succinyl-CoA. With respect to regulation, during catalysis, accumulation of oxidized inactive cofactor hydroxocobalamin (OH2Cbl) leads to loss of MMUT activity. Interaction with MMAA decreases the rate of OH2Cbl formation and promotes the replacement of OH2Cbl by the active cofactor adenosylcobalamin (AdoCbl), thereby restoring MMUT activity. Inhibited by itaconyl-CoA, a metabolite that inactivates the coenzyme B12 cofactor. Inhibited at high concentration of substrate. Its function is as follows. Catalyzes the reversible isomerization of methylmalonyl-CoA (MMCoA) (generated from branched-chain amino acid metabolism and degradation of dietary odd chain fatty acids and cholesterol) to succinyl-CoA (3-carboxypropionyl-CoA), a key intermediate of the tricarboxylic acid cycle. The sequence is that of Methylmalonyl-CoA mutase, mitochondrial from Homo sapiens (Human).